We begin with the raw amino-acid sequence, 82 residues long: Omega-conotoxin-like 9 (82 aa).

Residues 1–22 (MKLTCMMIAAVLFLTTWTFVTA) form the signal peptide. The propeptide occupies 23–51 (DDSRYGLKNLFPKARHEMKNPEASKLNKR). 3 disulfide bridges follow: C54–C69, C61–C73, and C68–C77.

This sequence belongs to the conotoxin O1 superfamily. As to expression, expressed by the venom duct.

It localises to the secreted. Omega-conotoxins act at presynaptic membranes, they bind and block voltage-gated calcium channels (Cav). This Conus striatus (Striated cone) protein is Omega-conotoxin-like 9.